An 86-amino-acid chain; its full sequence is Acyl carrier protein (86 aa).

In terms of domain architecture, Carrier spans 10–85 (DKIEQKVIEM…DVIKYIKERQ (76 aa)). Ser-45 carries the post-translational modification O-(pantetheine 4'-phosphoryl)serine.

It belongs to the acyl carrier protein (ACP) family. 4'-phosphopantetheine is transferred from CoA to a specific serine of apo-ACP by AcpS. This modification is essential for activity because fatty acids are bound in thioester linkage to the sulfhydryl of the prosthetic group.

Its subcellular location is the cytoplasm. The protein operates within lipid metabolism; fatty acid biosynthesis. Carrier of the growing fatty acid chain in fatty acid biosynthesis. This Rickettsia africae (strain ESF-5) protein is Acyl carrier protein.